The following is a 61-amino-acid chain: Small ribosomal subunit protein uS14 (61 aa).

Residues C24, C27, C40, and C43 each contribute to the Zn(2+) site.

This sequence belongs to the universal ribosomal protein uS14 family. Zinc-binding uS14 subfamily. As to quaternary structure, part of the 30S ribosomal subunit. Contacts proteins S3 and S10. The cofactor is Zn(2+).

Its function is as follows. Binds 16S rRNA, required for the assembly of 30S particles and may also be responsible for determining the conformation of the 16S rRNA at the A site. The sequence is that of Small ribosomal subunit protein uS14 from Streptococcus thermophilus (strain CNRZ 1066).